The sequence spans 383 residues: Dephospho-CoA kinase (383 aa).

One can recognise a DPCK domain in the interval 3 to 201 (RIGLTGGMGA…RRLVPFERNL (199 aa)). 11 to 16 (GAGKST) lines the ATP pocket. The tract at residues 196-383 (PFERNLRAAT…EVAERLLGTV (188 aa)) is UPF0157.

In the N-terminal section; belongs to the CoaE family. This sequence in the C-terminal section; belongs to the UPF0157 (GrpB) family.

The protein localises to the cytoplasm. It catalyses the reaction 3'-dephospho-CoA + ATP = ADP + CoA + H(+). Its pathway is cofactor biosynthesis; coenzyme A biosynthesis; CoA from (R)-pantothenate: step 5/5. Catalyzes the phosphorylation of the 3'-hydroxyl group of dephosphocoenzyme A to form coenzyme A. This Nocardia farcinica (strain IFM 10152) protein is Dephospho-CoA kinase.